We begin with the raw amino-acid sequence, 75 residues long: UPF0057 membrane protein At2g24040 (75 aa).

Helical transmembrane passes span 4–24 and 33–53; these read SCEL…GVCL and FFIC…YAIY.

Belongs to the UPF0057 (PMP3) family.

The protein localises to the membrane. The sequence is that of UPF0057 membrane protein At2g24040 from Arabidopsis thaliana (Mouse-ear cress).